The chain runs to 210 residues: Peptidyl-tRNA hydrolase (210 aa).

Tyrosine 15 lines the tRNA pocket. The Proton acceptor role is filled by histidine 20. Phenylalanine 66, asparagine 68, and asparagine 114 together coordinate tRNA. The tract at residues 186 to 210 (IHTSKPPRPKPPRREPGDGGTPATA) is disordered.

This sequence belongs to the PTH family. In terms of assembly, monomer.

It is found in the cytoplasm. It catalyses the reaction an N-acyl-L-alpha-aminoacyl-tRNA + H2O = an N-acyl-L-amino acid + a tRNA + H(+). Its function is as follows. Hydrolyzes ribosome-free peptidyl-tRNAs (with 1 or more amino acids incorporated), which drop off the ribosome during protein synthesis, or as a result of ribosome stalling. Catalyzes the release of premature peptidyl moieties from peptidyl-tRNA molecules trapped in stalled 50S ribosomal subunits, and thus maintains levels of free tRNAs and 50S ribosomes. The sequence is that of Peptidyl-tRNA hydrolase from Variovorax paradoxus (strain S110).